The chain runs to 260 residues: Cytosolic Fe-S cluster assembly factor Nubp2 homolog (260 aa).

Position 14 to 21 (14 to 21 (GKGGVGKS)) interacts with ATP. [4Fe-4S] cluster contacts are provided by C188 and C191.

The protein belongs to the Mrp/NBP35 ATP-binding proteins family. NUBP2/CFD1 subfamily. Heterotetramer of 2 Nubp1 and 2 Nubp2 chains. [4Fe-4S] cluster is required as a cofactor.

It is found in the cytoplasm. Component of the cytosolic iron-sulfur (Fe/S) protein assembly (CIA) machinery. Required for maturation of extramitochondrial Fe-S proteins. The Nubp1-Nubp2 heterotetramer forms a Fe-S scaffold complex, mediating the de novo assembly of an Fe-S cluster and its transfer to target apoproteins. The chain is Cytosolic Fe-S cluster assembly factor Nubp2 homolog from Drosophila simulans (Fruit fly).